Consider the following 483-residue polypeptide: MERYMSLKKKISYSELIGSAKANELQTQLQAYVPGKDPNIVVEHEPSKNAAKELIRGDYRWGHQGDDKSETFQLTYSFLESEPDNMPWHITGFSAFNEEQRTAAKLSIQSWTDVANINFTETTDSDKAHITFGFFDASLTGSYAFAYLPSPESKQSGTWYNLKSRTFSENDIGVNGYGRQTFTHEIGHTLGLEHPAAYNASDKERPTYKKSATYFEDSRAYTVMSYFGEKNTRTDFKGIYSSAPLLNDISAIQEVYGANNTTRTDDTVYGFNSNTDRDFFTAKDENSKLLFTAWDAGGNDTFDFSGFTQDQRINLNEASFSDVGGLKGNVSIARGVTIENAIGGSGNDILIGNDAENILKGGAGDDIIYGGLGADQLWGGEGKDTFVYLSAKESPPLERDWIHDFVSGEDKIDVSLFDLGEAGKGGVKFVREFTGAVGEAVLRYDTVNKVNDFAINLGDKFSYDDFWVKIVGEPILESDFILA.

Histidine 184 is a Zn(2+) binding site. The active site involves glutamate 185. Zn(2+) is bound by residues histidine 188 and histidine 194. The Ca(2+) site is built by arginine 263, aspartate 266, aspartate 295, glycine 297, glycine 298, aspartate 300, threonine 337, and glutamate 339. Hemolysin-type calcium-binding repeat units follow at residues 342-359 (IGGS…ENIL) and 360-377 (KGGA…ADQL).

This sequence belongs to the peptidase M10B family. It depends on Zn(2+) as a cofactor. Requires Ca(2+) as cofactor.

The protein resides in the secreted. It catalyses the reaction Preferential cleavage of bonds with hydrophobic residues in P1'.. Inhibited by 8 mM 1,10-phenanthroline and 10 mM EDTA, but not by PMSF. Functionally, involved in the inhibition of insect antibacterial peptides. Reduces the antibacterial activity of G.mellonella hemolymph by 50%. Reduces the antibacterial activity of cecropin A by 80% and cecropin B by 75%. The chain is Serralysin from Photorhabdus sp. (strain Az29).